The primary structure comprises 337 residues: Holliday junction branch migration complex subunit RuvB (337 aa).

The interval 1 to 179 is large ATPase domain (RuvB-L); that stretch reads MTHQVAVLHQ…FAFSARLSYY (179 aa). ATP-binding positions include L18, R19, G60, K63, T64, S65, 126 to 128, R169, Y179, and R216; that span reads EDF. Residue T64 participates in Mg(2+) binding. The small ATPAse domain (RuvB-S) stretch occupies residues 180-250; the sequence is SDQDLKEILV…VAEKALAMLL (71 aa). The tract at residues 253–337 is head domain (RuvB-H); the sequence is DWGLNEIDIK…KNLLSLGEGQ (85 aa). Residues K308 and R313 each coordinate DNA.

The protein belongs to the RuvB family. In terms of assembly, homohexamer. Forms an RuvA(8)-RuvB(12)-Holliday junction (HJ) complex. HJ DNA is sandwiched between 2 RuvA tetramers; dsDNA enters through RuvA and exits via RuvB. An RuvB hexamer assembles on each DNA strand where it exits the tetramer. Each RuvB hexamer is contacted by two RuvA subunits (via domain III) on 2 adjacent RuvB subunits; this complex drives branch migration. In the full resolvosome a probable DNA-RuvA(4)-RuvB(12)-RuvC(2) complex forms which resolves the HJ.

It localises to the cytoplasm. It catalyses the reaction ATP + H2O = ADP + phosphate + H(+). Functionally, the RuvA-RuvB-RuvC complex processes Holliday junction (HJ) DNA during genetic recombination and DNA repair, while the RuvA-RuvB complex plays an important role in the rescue of blocked DNA replication forks via replication fork reversal (RFR). RuvA specifically binds to HJ cruciform DNA, conferring on it an open structure. The RuvB hexamer acts as an ATP-dependent pump, pulling dsDNA into and through the RuvAB complex. RuvB forms 2 homohexamers on either side of HJ DNA bound by 1 or 2 RuvA tetramers; 4 subunits per hexamer contact DNA at a time. Coordinated motions by a converter formed by DNA-disengaged RuvB subunits stimulates ATP hydrolysis and nucleotide exchange. Immobilization of the converter enables RuvB to convert the ATP-contained energy into a lever motion, pulling 2 nucleotides of DNA out of the RuvA tetramer per ATP hydrolyzed, thus driving DNA branch migration. The RuvB motors rotate together with the DNA substrate, which together with the progressing nucleotide cycle form the mechanistic basis for DNA recombination by continuous HJ branch migration. Branch migration allows RuvC to scan DNA until it finds its consensus sequence, where it cleaves and resolves cruciform DNA. This chain is Holliday junction branch migration complex subunit RuvB, found in Chlamydia pneumoniae (Chlamydophila pneumoniae).